A 408-amino-acid chain; its full sequence is MQQTTFEESRYRWQDSLENVAVCLPFRCPRCGDHTRFRSLSSLRAHLEFSHSYEERTLLTKCSLLPSLKDTDLLRSSELPKQGKLLRGHAKVTKQKPSYVNLYSISHGHSKDPKPFEMVAERPVSYVQTYTAVDIRADSLDAPRSSSGLPTQDTKAAFEAHVREKFNRMVEAVDRTIEKRIDKLTKELAQKTAELLEVRAAFVQLTQKKQEVQRRERALHKQVDVAVEMIAVLKQRLTESEEELLRKEEEVVTFNHFLEAAAEKEVQGKARLQDFIENLLQRVELAEKQLEYYQSQQASGFSHDTSEHMLTDISSSRKSRCLSRGHQHSVCNHPELKAHFHLKGRSYLKKAKDERAGMQPAKAIHEQAESPREFFRPAKKGEHLGLSRKGNFRPKMAKKKPTAIVNII.

At Ser-16 the chain carries Phosphoserine. Residues 26 to 51 (FRCPRCGDHTRFRSLSSLRAHLEFSH) form a C2H2-type; degenerate zinc finger. 2 positions are modified to phosphoserine: Ser-139 and Ser-146. Residues 170–298 (VEAVDRTIEK…QLEYYQSQQA (129 aa)) adopt a coiled-coil conformation. Thr-176 carries the post-translational modification Phosphothreonine. Position 370 is a phosphoserine (Ser-370).

Homodimers. Interacts with NDE1 and NDEL1. Interacts with DISC1. Interacts with PARP1. Interacts with MCRS1. In terms of tissue distribution, expressed in cerebral cortex, hippocampus, olfactory tubercle and striatum.

The protein localises to the cytoplasm. It is found in the cytoskeleton. Its subcellular location is the microtubule organizing center. The protein resides in the centrosome. Functionally, involved in the positive regulation of oligodendrocyte differentiation during postnatal growth. Involved in the morphogenesis of basket cells in the somatosensory cortex during embryogenesis. Involved in dendritic arborization, morphogenesis of spine density dendrite, and establishment of postsynaptic dendrite density in cortical pyramidal neurons. Involved in the regulation of neurogenesis. Negatively regulates neurite outgrowth. Involved in homologous recombination (HR) repair pathway. Required for proper resolution of DNA double-strand breaks (DSBs) by HR. Is required for recovery of stalled replication forks, and directly contributes to genomic stability. Interacts with PARP1 and mediates MRE11-dependent DNA end resection during replication fork recovery. Contributes to genomic stability by preventing telomere dysfunction. This chain is Protein ZNF365 (Znf365), found in Rattus norvegicus (Rat).